The chain runs to 458 residues: Elongation factor 1-alpha (458 aa).

N,N,N-trimethylglycine is present on glycine 2. At lysine 3 the chain carries N6,N6-dimethyllysine; alternate. Lysine 3 carries the N6-methyllysine; alternate modification. The tr-type G domain occupies lysine 5–serine 240. Residues glycine 14–serine 21 are G1. Position 14–21 (glycine 14–serine 21) interacts with GTP. Lysine 30 carries the N6-methyllysine modification. Residues glycine 70 to aspartate 74 form a G2 region. Lysine 79 carries the post-translational modification N6,N6,N6-trimethyllysine. The segment at aspartate 91–glycine 94 is G3. GTP is bound by residues aspartate 91 to histidine 95 and asparagine 153 to aspartate 156. The interval asparagine 153–aspartate 156 is G4. The G5 stretch occupies residues serine 192–tryptophan 194. N6,N6-dimethyllysine; alternate is present on lysine 316. The residue at position 316 (lysine 316) is an N6-methyllysine; alternate. Residue lysine 390 is modified to N6-methyllysine.

It belongs to the TRAFAC class translation factor GTPase superfamily. Classic translation factor GTPase family. EF-Tu/EF-1A subfamily.

It is found in the cytoplasm. Its function is as follows. This protein promotes the GTP-dependent binding of aminoacyl-tRNA to the A-site of ribosomes during protein biosynthesis. This Absidia glauca (Pin mould) protein is Elongation factor 1-alpha (TEF-1).